A 396-amino-acid chain; its full sequence is Protein NDRG1-A (396 aa).

The interval 326-396 (RSRTGSAASS…NSPKSMEVSC (71 aa)) is disordered. Positions 327–340 (SRTGSAASSSSQDG) are enriched in low complexity. 4 tandem repeats follow at residues 340–349 (GNRSRSHTNE), 350–359 (GSRSRSHTGD), 360–369 (GNRSRAHTGD), and 370–379 (GNRSRSHTDT). The segment at 340-379 (GNRSRSHTNEGSRSRSHTGDGNRSRAHTGDGNRSRSHTDT) is 4 X 10 AA tandem repeats of G-[NS]-R-S-R-[AS]-H-T-[DGN]-[DET]. Positions 346 to 377 (HTNEGSRSRSHTGDGNRSRAHTGDGNRSRSHT) are enriched in basic and acidic residues. Positions 378-390 (DTNNINSDQNSPK) are enriched in polar residues.

It belongs to the NDRG family.

In terms of biological role, may be involved in pronephros development, after specification of the pronephros. In Xenopus laevis (African clawed frog), this protein is Protein NDRG1-A (ndrg1-a).